Here is a 302-residue protein sequence, read N- to C-terminus: Bifunctional phosphoglucose/phosphomannose isomerase (302 aa).

One can recognise an SIS domain in the interval 27–160; the sequence is VEGEVVRIEA…KVYGIDVKIP (134 aa). D-fructose 6-phosphate is bound by residues Gly-47, Ser-48, Ser-87, Ser-89, Thr-92, and Arg-135. Positions 47, 48, 87, 89, 92, and 135 each coordinate D-glucose 6-phosphate. Catalysis depends on Glu-203, which acts as the Proton acceptor. D-fructose 6-phosphate-binding residues include His-219 and Lys-298. Positions 219 and 298 each coordinate D-glucose 6-phosphate. His-219 serves as the catalytic Proton donor. Catalysis depends on Lys-298, which acts as the Proton acceptor.

This sequence belongs to the PGI/PMI family. In terms of assembly, homodimer.

It is found in the cytoplasm. It catalyses the reaction alpha-D-glucose 6-phosphate = beta-D-fructose 6-phosphate. The catalysed reaction is D-mannose 6-phosphate = D-fructose 6-phosphate. Its activity is regulated as follows. Inhibited by 5-phosphoarabinonate (PAB) and 6-phosphogluconate. Its function is as follows. Dual specificity isomerase that catalyzes the isomerization of both glucose-6-phosphate and mannose-6-phosphate to fructose-6-phosphate with similar catalytic efficiency. This chain is Bifunctional phosphoglucose/phosphomannose isomerase, found in Pyrobaculum aerophilum (strain ATCC 51768 / DSM 7523 / JCM 9630 / CIP 104966 / NBRC 100827 / IM2).